A 264-amino-acid chain; its full sequence is NAD kinase 1 (264 aa).

The active-site Proton acceptor is D45. Residues 45 to 46, G46, 122 to 123, R148, D150, S158, 161 to 166, and H223 contribute to the NAD(+) site; these read DG, NE, and TAYNKS.

It belongs to the NAD kinase family. In terms of assembly, homotetramer. A divalent metal cation is required as a cofactor.

The protein resides in the cytoplasm. The catalysed reaction is NAD(+) + ATP = ADP + NADP(+) + H(+). Its activity is regulated as follows. Competitively inhibited by 5'-thioacetyladenosine (TAA) and di-(5'-thioadenosine) (DTA). In terms of biological role, involved in the regulation of the intracellular balance of NAD and NADP, and is a key enzyme in the biosynthesis of NADP. Catalyzes specifically the phosphorylation on 2'-hydroxyl of the adenosine moiety of NAD to yield NADP. The chain is NAD kinase 1 from Listeria monocytogenes serovar 1/2a (strain ATCC BAA-679 / EGD-e).